Reading from the N-terminus, the 273-residue chain is Ribosomal RNA small subunit methyltransferase A (273 aa).

S-adenosyl-L-methionine is bound by residues Asn18, Leu20, Gly45, Glu66, Asp91, and Asn113.

Belongs to the class I-like SAM-binding methyltransferase superfamily. rRNA adenine N(6)-methyltransferase family. RsmA subfamily.

The protein resides in the cytoplasm. It carries out the reaction adenosine(1518)/adenosine(1519) in 16S rRNA + 4 S-adenosyl-L-methionine = N(6)-dimethyladenosine(1518)/N(6)-dimethyladenosine(1519) in 16S rRNA + 4 S-adenosyl-L-homocysteine + 4 H(+). Its function is as follows. Specifically dimethylates two adjacent adenosines (A1518 and A1519) in the loop of a conserved hairpin near the 3'-end of 16S rRNA in the 30S particle. May play a critical role in biogenesis of 30S subunits. The chain is Ribosomal RNA small subunit methyltransferase A from Shigella flexneri.